A 1233-amino-acid chain; its full sequence is Rho guanine nucleotide exchange factor 10-like protein (1233 aa).

Over residues 1–10 (MASSNPPPQP) the composition is skewed to pro residues. Residues 1–93 (MASSNPPPQP…GTGVPAWVSN (93 aa)) form a disordered region. Acidic residues predominate over residues 26-46 (EAEDDPGEAFEFDDSDDEEDT). Phosphoserine is present on S40. A compositionally biased stretch (low complexity) spans 72–89 (PVTDPDPAAAPPGTGVPA). Y131 and Y152 each carry phosphotyrosine. Residues 159-193 (GAPRQAEDLGWSSSEFESYSEDSGEEAKPEVEPAK) form a disordered region. The segment covering 183 to 193 (EEAKPEVEPAK) has biased composition (basic and acidic residues). S240 carries the phosphoserine modification. Residues 275–462 (VRRHILGSIV…ETLAEKLNEQ (188 aa)) form the DH domain. Residues 1089–1104 (QEEAEGPRAEEEKPDG) show a composition bias toward basic and acidic residues. 2 disordered regions span residues 1089 to 1117 (QEEAEGPRAEEEKPDGQAHQPMPDSHVGR) and 1140 to 1161 (PLLSMREPAPADGAALEHSEED).

In terms of assembly, interacts with RHOA, RHOB and RHOC.

It localises to the cytoplasm. In terms of biological role, acts as a guanine nucleotide exchange factor (GEF) for RHOA, RHOB and RHOC. In Pongo abelii (Sumatran orangutan), this protein is Rho guanine nucleotide exchange factor 10-like protein (ARHGEF10L).